A 459-amino-acid polypeptide reads, in one-letter code: Plasma alpha-L-fucosidase (459 aa).

Positions Met-1–Ala-23 are cleaved as a signal peptide. Asn-163 and Asn-231 each carry an N-linked (GlcNAc...) asparagine glycan. At Ser-293 the chain carries Phosphoserine. Asn-369 carries N-linked (GlcNAc...) asparagine glycosylation.

It belongs to the glycosyl hydrolase 29 family. In terms of assembly, homotetramer.

It is found in the secreted. The catalysed reaction is an alpha-L-fucoside + H2O = L-fucose + an alcohol. In terms of biological role, alpha-L-fucosidase is responsible for hydrolyzing the alpha-1,6-linked fucose joined to the reducing-end N-acetylglucosamine of the carbohydrate moieties of glycoproteins. This chain is Plasma alpha-L-fucosidase (Fuca2), found in Rattus norvegicus (Rat).